The sequence spans 1499 residues: Collagen alpha-2(V) chain (1499 aa).

A signal peptide spans 1 to 26 (MMANWAEARPLLILIVLLGQFVSIKA). One can recognise a VWFC domain in the interval 39 to 97 (IACTQNGQMYLNRDIWKPAPCQICVCDNGAILCDKIECQDVLDCADPVTPPGECCPVCS). The disordered stretch occupies residues 104 to 1268 (NTNFGRGRKG…DDKNKTDPGV (1165 aa)). Residues 170-182 (PGAPGPPGHPSHP) show a composition bias toward pro residues. Over residues 212–227 (PGSVGPVGPRGPQGLQ) the composition is skewed to low complexity. The span at 236–248 (TGPPGEPGDPGPM) shows a compositional bias: pro residues. Hydroxyproline occurs at positions 290, 293, and 296. 2 stretches are compositionally biased toward low complexity: residues 322–340 (EAGP…PRGM) and 427–443 (TPGA…SGPP). The Cell attachment site motif lies at 506–508 (RGD). Composition is skewed to low complexity over residues 604–626 (SIGI…SGDP) and 694–709 (DQGV…PLGP). Residues Pro-611 and Pro-617 each carry the hydroxyproline modification. The span at 710-721 (RGERGNPGERGE) shows a compositional bias: basic and acidic residues. The span at 732–741 (GMAGGHGPDG) shows a compositional bias: gly residues. Residues 742–758 (PKGSPGPSGTPGDTGPP) show a composition bias toward low complexity. The span at 776 to 787 (KGDRGGIGEKGA) shows a compositional bias: basic and acidic residues. The span at 826 to 841 (PPGSRGNPGSRGENGP) shows a compositional bias: low complexity. Over residues 894 to 903 (GLKGGRGTQG) the composition is skewed to gly residues. 3-hydroxyproline; partial is present on Pro-919. Over residues 919 to 929 (PPGPAGAPGPA) the composition is skewed to pro residues. 6 short sequence motifs (cell attachment site) span residues 944–946 (RGD), 1067–1069 (RGD), 1070–1072 (RGD), 1100–1102 (RGD), 1127–1129 (RGD), and 1136–1138 (RGD). Over residues 1063 to 1072 (AVGERGDRGD) the composition is skewed to basic and acidic residues. Residues 1093–1114 (APGDAGQRGDPGSRGPIGPPGR) show a composition bias toward low complexity. A compositionally biased stretch (basic and acidic residues) spans 1127–1141 (RGDKGDHGDRGDRGQ). Pro-1156 is subject to 3-hydroxyproline; partial. 2 stretches are compositionally biased toward pro residues: residues 1171–1181 (PFGPRGPPGPV) and 1211–1226 (EGPP…PGPP). A propeptide spans 1230 to 1499 (TAALGDIMGH…GVEIGPVCFV (270 aa)) (C-terminal propeptide). Asn-1262 carries an N-linked (GlcNAc...) asparagine glycan. The region spanning 1266 to 1499 (PGVHATLKSL…GVEIGPVCFV (234 aa)) is the Fibrillar collagen NC1 domain. 3 disulfides stabilise this stretch: Cys-1296-Cys-1328, Cys-1336-Cys-1497, and Cys-1405-Cys-1450. Positions 1314, 1316, 1317, and 1322 each coordinate Ca(2+). Residue Asn-1400 is glycosylated (N-linked (GlcNAc...) asparagine).

The protein belongs to the fibrillar collagen family. As to quaternary structure, trimers of two alpha 1(V) and one alpha 2(V) chains in most tissues and trimers of one alpha 1(V), one alpha 2(V), and one alpha 3(V) chains in placenta. Prolines at the third position of the tripeptide repeating unit (G-X-P) are hydroxylated in some or all of the chains. Probably 3-hydroxylated on Pro-919 and Pro-1156 by LEPREL1.

It is found in the secreted. The protein resides in the extracellular space. The protein localises to the extracellular matrix. In terms of biological role, type V collagen is a member of group I collagen (fibrillar forming collagen). It is a minor connective tissue component of nearly ubiquitous distribution. Type V collagen binds to DNA, heparan sulfate, thrombospondin, heparin, and insulin. Type V collagen is a key determinant in the assembly of tissue-specific matrices. The chain is Collagen alpha-2(V) chain (COL5A2) from Homo sapiens (Human).